A 609-amino-acid polypeptide reads, in one-letter code: Granule-bound starch synthase 1, chloroplastic/amyloplastic (609 aa).

A chloroplast-targeting transit peptide spans 1-77 (MSALTTSQLA…SRRFPSVVVY (77 aa)). A disordered region spans residues 29–67 (RHGFQGLKPRSPAGGDATSLSVTTSARATPKQQRSVQRG). Residues 46–66 (TSLSVTTSARATPKQQRSVQR) are compositionally biased toward polar residues. Residue Lys-97 participates in ADP-alpha-D-glucose binding.

It belongs to the glycosyltransferase 1 family. Bacterial/plant glycogen synthase subfamily.

The protein localises to the plastid. Its subcellular location is the chloroplast. The protein resides in the amyloplast. It carries out the reaction an NDP-alpha-D-glucose + [(1-&gt;4)-alpha-D-glucosyl](n) = [(1-&gt;4)-alpha-D-glucosyl](n+1) + a ribonucleoside 5'-diphosphate + H(+). It participates in glycan biosynthesis; starch biosynthesis. Its function is as follows. Required for the synthesis of amylose in endosperm. This Oryza glaberrima (African rice) protein is Granule-bound starch synthase 1, chloroplastic/amyloplastic (WAXY).